Here is a 150-residue protein sequence, read N- to C-terminus: Leukotriene C4 synthase (150 aa).

The Cytoplasmic segment spans residues 1–6 (MKDEVA). Residues 7-27 (LLATVTLLGVLLQAYFSLQVI) form a helical membrane-spanning segment. The Lumenal segment spans residues 28-48 (RARRAHRVSPPLTTGPPEFER). Arg-30 contributes to the glutathione binding site. The active-site Proton donor is Arg-31. Phosphoserine is present on Ser-36. Residues 49-69 (VYRAQVNCSEYFPLFLATLWV) form a helical membrane-spanning segment. Glutathione-binding positions include 51–55 (RAQVN) and 58–59 (EY). Residues 70 to 73 (AGVY) lie on the Cytoplasmic side of the membrane. A helical membrane pass occupies residues 74 to 94 (FHEGAAALCGLVYLFTRLRYF). Residue 93-97 (YFWGY) participates in glutathione binding. The Lumenal segment spans residues 95-104 (WGYARSAQLR). Arg-104 acts as the Proton acceptor in catalysis. The chain crosses the membrane as a helical span at residues 105 to 124 (LAPLYASARALWLLLALATL). The Cytoplasmic portion of the chain corresponds to 125 to 150 (GLLAHFLPAAARAALLRLLRALLRTA).

Belongs to the MAPEG family. Homotrimer. Interacts with ALOX5AP and ALOX5. Phosphorylation at Ser-36 by RPS6KB1 inhibits the leukotriene-C4 synthase activity.

It is found in the nucleus outer membrane. Its subcellular location is the endoplasmic reticulum membrane. The protein localises to the nucleus membrane. The enzyme catalyses leukotriene C4 = leukotriene A4 + glutathione. It catalyses the reaction (13S,14S)-epoxy-(4Z,7Z,9E,11E,16Z,19Z)-docosahexaenoate + glutathione = (13R)-S-glutathionyl-(14S)-hydroxy-(4Z,7Z,9E,11E,16Z,19Z)-docosahexaenoate. The protein operates within lipid metabolism; leukotriene C4 biosynthesis. Inhibited by MK886. Catalyzes the conjugation of leukotriene A4 with reduced glutathione (GSH) to form leukotriene C4 with high specificity. Can also catalyze the transfer of a glutathionyl group from glutathione (GSH) to 13(S),14(S)-epoxy-docosahexaenoic acid to form maresin conjugate in tissue regeneration 1 (MCTR1), a bioactive lipid mediator that possess potent anti-inflammatory and proresolving actions. This Cavia porcellus (Guinea pig) protein is Leukotriene C4 synthase (LTC4S).